A 243-amino-acid polypeptide reads, in one-letter code: Small ribosomal subunit protein eS4 (243 aa).

The S4 RNA-binding domain maps to Ile43 to Asn105.

The protein belongs to the eukaryotic ribosomal protein eS4 family. As to quaternary structure, part of the 30S ribosomal subunit.

The sequence is that of Small ribosomal subunit protein eS4 from Thermococcus kodakarensis (strain ATCC BAA-918 / JCM 12380 / KOD1) (Pyrococcus kodakaraensis (strain KOD1)).